The primary structure comprises 513 residues: Leucine-rich repeat-containing protein 24 (513 aa).

The first 20 residues, 1–20 (MALRAPALLPLLLLLLPLRA), serve as a signal peptide directing secretion. The LRRNT domain occupies 21–50 (AGCPAACRCYSATVECGALRLRVVPLGIPP). LRR repeat units lie at residues 51–72 (GTQT…ALAP), 75–96 (ALRR…AFRA), 99–120 (RLLE…AFVG), 123–144 (QLRV…TFLH), 147–168 (RLQE…ALAG), and 171–192 (SLAL…ALQP). The LRRCT domain occupies 204–259 (NPWRCDCALHWLGAWIKEGGQRLLTSRDRKIMCAEPPRLALQSLLDVSHSSLICIP). The region spanning 260–361 (PSVHVQPLEL…GAARVPFRLL (102 aa)) is the Ig-like C2-type domain. Cys-281 and Cys-345 are disulfide-bonded. N-linked (GlcNAc...) asparagine glycans are attached at residues Asn-334 and Asn-363. A disordered region spans residues 365–391 (SRQQPQQPAQPPPPAARPAGSEPRPEA). A helical membrane pass occupies residues 406 to 426 (AIAAAIALLALTALLLVAMIC).

It is found in the membrane. This is Leucine-rich repeat-containing protein 24 (LRRC24) from Homo sapiens (Human).